The sequence spans 469 residues: Neuraminidase (469 aa).

Over 1–9 (MNPNQKIIT) the chain is Intravirion. A helical membrane pass occupies residues 10-30 (IGSVSLTIATVCFLMQIAILV). The interval 11 to 33 (GSVSLTIATVCFLMQIAILVTTV) is involved in apical transport and lipid raft association. The Virion surface segment spans residues 31-469 (TTVTLHFKQY…DGADINLMPI (439 aa)). The segment at 36–88 (HFKQYECDSPANNQVMPCEPIIIERNITEIVYLTNTTIEKEICPKLVEYRNWS) is hypervariable stalk region. N-linked (GlcNAc...) asparagine; by host glycans are attached at residues Asn-61, Asn-70, and Asn-86. Residues 91–469 (QCKITGFAPF…DGADINLMPI (379 aa)) form a head of neuraminidase region. Intrachain disulfides connect Cys-92–Cys-417, Cys-124–Cys-129, Cys-183–Cys-230, Cys-232–Cys-237, Cys-278–Cys-291, Cys-280–Cys-289, Cys-318–Cys-337, and Cys-421–Cys-447. Residue Arg-118 participates in substrate binding. The N-linked (GlcNAc...) asparagine; by host glycan is linked to Asn-146. Asp-151 acts as the Proton donor/acceptor in catalysis. Position 152 (Arg-152) interacts with substrate. N-linked (GlcNAc...) asparagine; by host glycosylation is found at Asn-200 and Asn-234. 276-277 (EE) contacts substrate. Arg-292 lines the substrate pocket. Ca(2+) contacts are provided by Asp-293, Gly-297, and Asp-324. The interval 326–350 (PRNNDRSSNSNCRNPNNDKGNHGVK) is disordered. The span at 331 to 343 (RSSNSNCRNPNND) shows a compositional bias: low complexity. Arg-371 is a binding site for substrate. Asn-402 is a glycosylation site (N-linked (GlcNAc...) asparagine; by host). Catalysis depends on Tyr-406, which acts as the Nucleophile.

It belongs to the glycosyl hydrolase 34 family. In terms of assembly, homotetramer. Ca(2+) serves as cofactor. Post-translationally, N-glycosylated.

It localises to the virion membrane. The protein localises to the host apical cell membrane. The catalysed reaction is Hydrolysis of alpha-(2-&gt;3)-, alpha-(2-&gt;6)-, alpha-(2-&gt;8)- glycosidic linkages of terminal sialic acid residues in oligosaccharides, glycoproteins, glycolipids, colominic acid and synthetic substrates.. With respect to regulation, inhibited by the neuraminidase inhibitors zanamivir (Relenza) and oseltamivir (Tamiflu). These drugs interfere with the release of progeny virus from infected cells and are effective against all influenza strains. Resistance to neuraminidase inhibitors is quite rare. Catalyzes the removal of terminal sialic acid residues from viral and cellular glycoconjugates. Cleaves off the terminal sialic acids on the glycosylated HA during virus budding to facilitate virus release. Additionally helps virus spread through the circulation by further removing sialic acids from the cell surface. These cleavages prevent self-aggregation and ensure the efficient spread of the progeny virus from cell to cell. Otherwise, infection would be limited to one round of replication. Described as a receptor-destroying enzyme because it cleaves a terminal sialic acid from the cellular receptors. May facilitate viral invasion of the upper airways by cleaving the sialic acid moieties on the mucin of the airway epithelial cells. Likely to plays a role in the budding process through its association with lipid rafts during intracellular transport. May additionally display a raft-association independent effect on budding. Plays a role in the determination of host range restriction on replication and virulence. Sialidase activity in late endosome/lysosome traffic seems to enhance virus replication. This Aves (whales) protein is Neuraminidase.